We begin with the raw amino-acid sequence, 95 residues long: Co-chaperonin GroES (95 aa).

The protein belongs to the GroES chaperonin family. As to quaternary structure, heptamer of 7 subunits arranged in a ring. Interacts with the chaperonin GroEL.

It is found in the cytoplasm. Functionally, together with the chaperonin GroEL, plays an essential role in assisting protein folding. The GroEL-GroES system forms a nano-cage that allows encapsulation of the non-native substrate proteins and provides a physical environment optimized to promote and accelerate protein folding. GroES binds to the apical surface of the GroEL ring, thereby capping the opening of the GroEL channel. This chain is Co-chaperonin GroES, found in Xylella fastidiosa (strain M12).